Consider the following 852-residue polypeptide: Disks large homolog 2 (852 aa).

S-palmitoyl cysteine attachment occurs at residues Cys-5 and Cys-7. A Phosphoserine modification is found at Ser-28. Tyr-58 bears the Phosphotyrosine mark. A Phosphoserine modification is found at Ser-65. PDZ domains are found at residues 98 to 184 (EITL…VRRR) and 193 to 279 (EIKL…VGKP). Phosphoserine occurs at positions 307, 328, 360, 365, 406, and 414. In terms of domain architecture, PDZ 3 spans 421-501 (KVVLHKGSTG…QTVTIIAQYQ (81 aa)). A Phosphotyrosine modification is found at Tyr-505. 3 positions are modified to phosphoserine: Ser-528, Ser-530, and Ser-553. The SH3 domain occupies 536 to 606 (KRSLYVRAMF…PSKRRVERKE (71 aa)). One can recognise a Guanylate kinase-like domain in the interval 662-837 (TRPVIILGPM…IYNQCKLVIE (176 aa)). Phosphotyrosine occurs at positions 732 and 737.

The protein belongs to the MAGUK family. In terms of assembly, interacts through its PDZ domains with NETO1. Interacts with NOS1/nNOS through second PDZ domain. Interacts with KCNJ2/Kir2.1 (via C-terminus) through one of its PDZ domains. Interacts with KCNJ4. Interacts with FRMPD4 (via C-terminus). Interacts with LRFN1. Interacts with LRFN2 and LRFN4. Interacts with FASLG. Interacts with ADAM22. Interacts with DGKI (via PDZ-binding motif). Palmitoylation of isoform 1 and isoform 2 is not required for targeting to postsynaptic density. Detected in juxtaparanodal zones in the central nervous system and at nerve terminal plexuses of basket cells in the cerebellum (at protein level). Brain. High levels in cerebellar Purkinje cells. Expressed in pyramidal cells of the Ammons's horn and granular cells of the dentate gyrus in the hippocampus as well as cerebral cortex and striatum. High levels in dorsal horn of spinal cord.

It localises to the cell membrane. It is found in the postsynaptic density. Its subcellular location is the synapse. The protein resides in the cell projection. The protein localises to the axon. It localises to the membrane. It is found in the perikaryon. In terms of biological role, required for perception of chronic pain through NMDA receptor signaling. Regulates surface expression of NMDA receptors in dorsal horn neurons of the spinal cord. Interacts with the cytoplasmic tail of NMDA receptor subunits as well as inward rectifying potassium channels. Involved in regulation of synaptic stability at cholinergic synapses. Part of the postsynaptic protein scaffold of excitatory synapses. The protein is Disks large homolog 2 (Dlg2) of Rattus norvegicus (Rat).